Reading from the N-terminus, the 151-residue chain is Transcription antitermination protein NusB (151 aa).

Belongs to the NusB family.

In terms of biological role, involved in transcription antitermination. Required for transcription of ribosomal RNA (rRNA) genes. Binds specifically to the boxA antiterminator sequence of the ribosomal RNA (rrn) operons. This chain is Transcription antitermination protein NusB, found in Thermodesulfovibrio yellowstonii (strain ATCC 51303 / DSM 11347 / YP87).